Consider the following 483-residue polypeptide: Pre-glycoprotein polyprotein GP complex (483 aa).

A lipid anchor (N-myristoyl glycine; by host) is attached at Gly2. The Extracellular portion of the chain corresponds to 2 to 17; the sequence is GQFISFMQEIPIFLQE. A helical membrane pass occupies residues 18 to 32; it reads ALNIALVAVSLICIV. Position 33 (Lys33) is a topological domain, cytoplasmic. A helical membrane pass occupies residues 34-53; it reads GLVNLYRCGLFQLMVFLVLA. Extracellular-side segments run 54–58 and 59–422; these read GRSCS and EETF…TLVD. Cys57 serves as a coordination point for Zn(2+). N-linked (GlcNAc...) asparagine; by host glycosylation is found at Asn83 and Asn95. 6 disulfide bridges follow: Cys92-Cys224, Cys134-Cys162, Cys205-Cys211, Cys269-Cys282, Cys291-Cys300, and Cys354-Cys375. N-linked (GlcNAc...) asparagine; by host glycosylation is found at Asn164 and Asn176. Residues Asn355, Asn363, Asn380, and Asn385 are each glycosylated (N-linked (GlcNAc...) asparagine; by host). A helical membrane pass occupies residues 423 to 443; sequence ICFWSTVFFTSTLFLHLIGFP. Over 444 to 483 the chain is Cytoplasmic; sequence THEHIRGEGCPLPHRLNSMGGCRCGKYLPLKKPTIWHRRH. 7 residues coordinate Zn(2+): His445, His447, Cys453, His457, Cys465, Cys467, and His483.

Belongs to the arenaviridae GPC protein family. In terms of assembly, homotetramer; disulfide-linked. Homotetramer. GP2 homotetramers bind through ionic interactions with GP1 homotetramers to form the GP complex together with the stable signal peptide. The GP-C polyprotein interacts with the host protease MBTPS1/SKI-1 resulting in the polyprotein processing. In terms of processing, specific enzymatic cleavages in vivo yield mature proteins. GP-C polyprotein is cleaved in the endoplasmic reticulum by the host protease MBTPS1. Only cleaved glycoprotein is incorporated into virions. The SSP remains stably associated with the GP complex following cleavage by signal peptidase and plays crucial roles in the trafficking of GP through the secretory pathway. Post-translationally, myristoylation is necessary for GP2-mediated fusion activity.

The protein resides in the virion membrane. The protein localises to the host endoplasmic reticulum membrane. Its subcellular location is the host Golgi apparatus membrane. It localises to the host cell membrane. Class I viral fusion protein that directs fusion of viral and host endosomal membranes, leading to delivery of the nucleocapsid into the cytoplasm. Membrane fusion is mediated by irreversible conformational changes induced upon acidification in the endosome. Functionally, stable signal peptide (SSP): cleaved and functions as a signal peptide. In addition, it is also retained as the third component of the GP complex. The SSP is required for efficient glycoprotein expression, post-translational maturation cleavage of GP1 and GP2, glycoprotein transport to the cell surface plasma membrane, formation of infectious virus particles, and acid pH-dependent glycoprotein-mediated cell fusion. In terms of biological role, interacts with the host receptor. In Artibeus (neotropical fruit bats), this protein is Pre-glycoprotein polyprotein GP complex.